Reading from the N-terminus, the 226-residue chain is Thiamine-phosphate synthase (226 aa).

4-amino-2-methyl-5-(diphosphooxymethyl)pyrimidine contacts are provided by residues Gln46–Lys50 and Asn87. Asp88 and Asp107 together coordinate Mg(2+). Ser126 provides a ligand contact to 4-amino-2-methyl-5-(diphosphooxymethyl)pyrimidine. Thr152 to Thr154 lines the 2-[(2R,5Z)-2-carboxy-4-methylthiazol-5(2H)-ylidene]ethyl phosphate pocket. 4-amino-2-methyl-5-(diphosphooxymethyl)pyrimidine is bound at residue Lys155. Residue Gly183 coordinates 2-[(2R,5Z)-2-carboxy-4-methylthiazol-5(2H)-ylidene]ethyl phosphate.

The protein belongs to the thiamine-phosphate synthase family. Requires Mg(2+) as cofactor.

It catalyses the reaction 2-[(2R,5Z)-2-carboxy-4-methylthiazol-5(2H)-ylidene]ethyl phosphate + 4-amino-2-methyl-5-(diphosphooxymethyl)pyrimidine + 2 H(+) = thiamine phosphate + CO2 + diphosphate. The enzyme catalyses 2-(2-carboxy-4-methylthiazol-5-yl)ethyl phosphate + 4-amino-2-methyl-5-(diphosphooxymethyl)pyrimidine + 2 H(+) = thiamine phosphate + CO2 + diphosphate. It carries out the reaction 4-methyl-5-(2-phosphooxyethyl)-thiazole + 4-amino-2-methyl-5-(diphosphooxymethyl)pyrimidine + H(+) = thiamine phosphate + diphosphate. Its pathway is cofactor biosynthesis; thiamine diphosphate biosynthesis; thiamine phosphate from 4-amino-2-methyl-5-diphosphomethylpyrimidine and 4-methyl-5-(2-phosphoethyl)-thiazole: step 1/1. Its function is as follows. Condenses 4-methyl-5-(beta-hydroxyethyl)thiazole monophosphate (THZ-P) and 2-methyl-4-amino-5-hydroxymethyl pyrimidine pyrophosphate (HMP-PP) to form thiamine monophosphate (TMP). This chain is Thiamine-phosphate synthase, found in Mycobacterium sp. (strain KMS).